Here is a 104-residue protein sequence, read N- to C-terminus: Large ribosomal subunit protein uL24 (104 aa).

It belongs to the universal ribosomal protein uL24 family. As to quaternary structure, part of the 50S ribosomal subunit.

Functionally, one of two assembly initiator proteins, it binds directly to the 5'-end of the 23S rRNA, where it nucleates assembly of the 50S subunit. In terms of biological role, one of the proteins that surrounds the polypeptide exit tunnel on the outside of the subunit. This Bartonella henselae (strain ATCC 49882 / DSM 28221 / CCUG 30454 / Houston 1) (Rochalimaea henselae) protein is Large ribosomal subunit protein uL24.